The primary structure comprises 141 residues: Hemoglobin subunit alpha (141 aa).

The region spanning 1-141 (VLSEEDKSHV…VSAMLTSKYR (141 aa)) is the Globin domain. H58 is a binding site for O2. H87 is a binding site for heme b.

Belongs to the globin family. In terms of assembly, heterotetramer of two alpha chains and two beta chains. As to expression, red blood cells.

Its function is as follows. Involved in oxygen transport from the lung to the various peripheral tissues. This is Hemoglobin subunit alpha (HBA) from Caiman crocodilus (Spectacled caiman).